Consider the following 126-residue polypeptide: Profilin-1A (126 aa).

Residues 2-36 (SWQTYVDTNLVGTGAVTQAAILGLDGNTWATSAGF) are actin binding. K104 bears the N6,N6,N6-trimethyllysine mark.

Belongs to the profilin family. Occurs in many kinds of cells as a complex with monomeric actin in a 1:1 ratio.

The protein localises to the cytoplasm. It is found in the cytoskeleton. Binds to actin and affects the structure of the cytoskeleton. At high concentrations, profilin prevents the polymerization of actin, whereas it enhances it at low concentrations. By binding to PIP2, it inhibits the formation of IP3 and DG. The protein is Profilin-1A of Acanthamoeba castellanii (Amoeba).